A 495-amino-acid polypeptide reads, in one-letter code: Fusicoccadiene 8-ol C-16 hydroxylase (495 aa).

A helical membrane pass occupies residues 12–32; that stretch reads VLLALIVWIGTTIIYNIYFHP. Residues N249 and N317 are each glycosylated (N-linked (GlcNAc...) asparagine). C439 provides a ligand contact to heme.

This sequence belongs to the cytochrome P450 family. It depends on heme as a cofactor.

Its subcellular location is the membrane. The protein operates within mycotoxin biosynthesis. In terms of biological role, cytochrome P450 monooxygenase; part of the gene cluster that mediates the biosynthesis of the diterpene glucoside brassicicene C. In the first step of the brassicicene C biosynthesis, the bifunctional diterpene synthase bsc8 that possesses both prenyl transferase and terpene cyclase activity, converts isopentenyl diphosphate and dimethylallyl diphosphate into geranylgeranyl diphosphate (GGDP) that is further converted into fusicocca-2,10(14)-diene, the first precursor for brassicicene C. Fusicocca-2,10(14)-diene is then substrate of cytochrome P450 monooxygenase bsc1 for hydroxylation at the C-8 position. Oxidation at C-16 position to aldehyde is then catalyzed by the cytochrome P450 monooyxygenase bsc7, yielding fusicocca-2,10(14)-diene-8-beta,16-diol. Follows the isomerization of the double bond and reduction of aldehyde to alcohol catalyzed by the short-chain dehydrogenase/reductase bsc3 to yield the diol compound fusicocca-1,10(14)-diene-8 beta,16-diol. The next step is the oxidation at the C-3 position of fusicocca-2,10(14)-diene-8-beta,16-diol catalyzed by the alpha-ketoglutarate dependent dioxygenase bsc9, to produce a triol compound. Methylation of the hydroxy group at position 16 is performed by the methyltransferase bsc6. 16-O-methylation is followed by oxidation at the C-13 position to ketone and an alkyl shift of the methyl group leads to brassicicene C. Although the probable acetyltransferase bsc4 is included in the gene cluster, no acetylation reactions are necessary for brassicicene C biosynthesis. However, the fact that brassicicene E, which is a structurally related compound having an acetoxy group at position 12, was previously isolated from another strain of A.brassicicola suggests that the ATCC 96836 strain might also produce a small amount of brassicicene E. The polypeptide is Fusicoccadiene 8-ol C-16 hydroxylase (Alternaria brassicicola (Dark leaf spot agent)).